The following is a 965-amino-acid chain: Argonaute protein wago-4 (965 aa).

The disordered stretch occupies residues 1–34 (MPALPPVYTPSGAPSSVHAPPAVPPVPVPTQPLR). Positions 10-20 (PSGAPSSVHAP) are enriched in low complexity. Residues 21–30 (PAVPPVPVPT) are compositionally biased toward pro residues. The 111-residue stretch at 318–428 (PILDKLKEIT…YPMELLKISS (111 aa)) folds into the PAZ domain. The region spanning 594 to 924 (TFVFIITDDS…YAKRGRNLWN (331 aa)) is the Piwi domain.

It belongs to the argonaute family. WAGO subfamily. As to quaternary structure, interacts with znfx-1; the interaction promotes the transmission of epigenetic information across generations. May interact with mina-1. Expressed in the hermaphrodite germline and in oocytes. Expressed at a low level in the male germline. Not expressed in the soma of hermaphrodites or males.

It is found in the cytoplasm. Its subcellular location is the perinuclear region. The protein localises to the cytoplasmic granule. Argonaute protein which is involved in the endogenous small interfering RNA (endo-siRNA) pathway and is required for RNA-mediated gene silencing (RNAi) in the germline. Interacts with secondary 22G-RNAs, which are RNA-dependent RNA polymerase-derived endo-siRNAs, typically 22 nucleotides in length with a 5'guanosine residue. Also interacts with the mRNA targets of 22G-RNAs. Associates with znfx-1 to mediate small RNA-directed transgenerational epigenetic inheritance of both germline- and soma-expressed genes. This is Argonaute protein wago-4 from Caenorhabditis elegans.